Consider the following 105-residue polypeptide: Small ribosomal subunit protein uS10 (105 aa).

Belongs to the universal ribosomal protein uS10 family. In terms of assembly, part of the 30S ribosomal subunit.

Functionally, involved in the binding of tRNA to the ribosomes. This chain is Small ribosomal subunit protein uS10, found in Rickettsia felis (strain ATCC VR-1525 / URRWXCal2) (Rickettsia azadi).